The primary structure comprises 245 residues: 23S rRNA (guanosine-2'-O-)-methyltransferase RlmB (245 aa).

Positions 197, 217, and 226 each coordinate S-adenosyl-L-methionine.

This sequence belongs to the class IV-like SAM-binding methyltransferase superfamily. RNA methyltransferase TrmH family. RlmB subfamily.

Its subcellular location is the cytoplasm. The catalysed reaction is guanosine(2251) in 23S rRNA + S-adenosyl-L-methionine = 2'-O-methylguanosine(2251) in 23S rRNA + S-adenosyl-L-homocysteine + H(+). Specifically methylates the ribose of guanosine 2251 in 23S rRNA. The polypeptide is 23S rRNA (guanosine-2'-O-)-methyltransferase RlmB (Pasteurella multocida (strain Pm70)).